The primary structure comprises 315 residues: tRNA uridine(34) hydroxylase (315 aa).

The Rhodanese domain maps to 122 to 223 (SDPDVLVIDT…YLEQIPQPES (102 aa)). Cysteine 183 serves as the catalytic Cysteine persulfide intermediate.

The protein belongs to the TrhO family.

The enzyme catalyses uridine(34) in tRNA + AH2 + O2 = 5-hydroxyuridine(34) in tRNA + A + H2O. Its function is as follows. Catalyzes oxygen-dependent 5-hydroxyuridine (ho5U) modification at position 34 in tRNAs. This is tRNA uridine(34) hydroxylase from Caulobacter vibrioides (strain ATCC 19089 / CIP 103742 / CB 15) (Caulobacter crescentus).